Consider the following 135-residue polypeptide: Small ribosomal subunit protein uS11 (135 aa).

This sequence belongs to the universal ribosomal protein uS11 family. Part of the 30S ribosomal subunit. Interacts with proteins S7 and S18. Binds to IF-3.

Functionally, located on the platform of the 30S subunit, it bridges several disparate RNA helices of the 16S rRNA. Forms part of the Shine-Dalgarno cleft in the 70S ribosome. This Solibacter usitatus (strain Ellin6076) protein is Small ribosomal subunit protein uS11.